Consider the following 449-residue polypeptide: Type 3 secretion system ATPase (449 aa).

178–183 is a binding site for ATP; the sequence is GCGKTT.

The protein belongs to the ATPase alpha/beta chains family. T3SS ATPase subfamily. In terms of assembly, the core secretion machinery of the T3SS is composed of approximately 20 different proteins, including cytoplasmic components, a base, an export apparatus and a needle. This subunit is part of the cytosolic complex. Forms homododecamers.

The protein localises to the cytoplasm. The catalysed reaction is ATP + H2O + cellular proteinSide 1 = ADP + phosphate + cellular proteinSide 2.. Its function is as follows. ATPase component of the type III secretion system (T3SS), also called injectisome, which is used to inject bacterial effector proteins into eukaryotic host cells. Acts as a molecular motor to provide the energy that is required for the export of proteins. Required for type III secretion apparatus (T3SA) formation, proper protein secretion, host cell invasion and virulence. May play a critical role in T3SS substrate recognition, disassembly of the effector/chaperone complex and unfolding of the effector in an ATP-dependent manner prior to secretion. This Pseudomonas syringae pv. tomato (strain ATCC BAA-871 / DC3000) protein is Type 3 secretion system ATPase.